We begin with the raw amino-acid sequence, 246 residues long: ATP synthase subunit a, chloroplastic (246 aa).

A run of 4 helical transmembrane segments spans residues 35–55 (GQVF…ALVG), 94–114 (VPYI…GALI), 133–153 (INVT…AGLS), and 202–222 (VFAL…GLFA).

The protein belongs to the ATPase A chain family. In terms of assembly, F-type ATPases have 2 components, CF(1) - the catalytic core - and CF(0) - the membrane proton channel. CF(1) has five subunits: alpha(3), beta(3), gamma(1), delta(1), epsilon(1). CF(0) has four main subunits: a, b, b' and c.

It localises to the plastid. The protein localises to the chloroplast thylakoid membrane. In terms of biological role, key component of the proton channel; it plays a direct role in the translocation of protons across the membrane. The polypeptide is ATP synthase subunit a, chloroplastic (Rhodomonas salina (Cryptomonas salina)).